Reading from the N-terminus, the 318-residue chain is Transaldolase (318 aa).

Catalysis depends on lysine 131, which acts as the Schiff-base intermediate with substrate.

It belongs to the transaldolase family. Type 1 subfamily. Homodimer.

It is found in the cytoplasm. The catalysed reaction is D-sedoheptulose 7-phosphate + D-glyceraldehyde 3-phosphate = D-erythrose 4-phosphate + beta-D-fructose 6-phosphate. It functions in the pathway carbohydrate degradation; pentose phosphate pathway; D-glyceraldehyde 3-phosphate and beta-D-fructose 6-phosphate from D-ribose 5-phosphate and D-xylulose 5-phosphate (non-oxidative stage): step 2/3. Transaldolase is important for the balance of metabolites in the pentose-phosphate pathway. This is Transaldolase from Cellvibrio japonicus (strain Ueda107) (Pseudomonas fluorescens subsp. cellulosa).